The chain runs to 231 residues: Proteasome subunit alpha type-2 (231 aa).

This sequence belongs to the peptidase T1A family. As to quaternary structure, the 26S proteasome consists of a 20S proteasome core and two 19S regulatory subunits. The 20S proteasome core is composed of 28 subunits that are arranged in four stacked rings, resulting in a barrel-shaped structure. The two end rings are each formed by seven alpha subunits, and the two central rings are each formed by seven beta subunits. The catalytic chamber with the active sites is on the inside of the barrel.

Its subcellular location is the cytoplasm. The protein localises to the nucleus. Functionally, the proteasome is a multicatalytic proteinase complex which is characterized by its ability to cleave peptides with Arg, Phe, Tyr, Leu, and Glu adjacent to the leaving group at neutral or slightly basic pH. The proteasome has an ATP-dependent proteolytic activity. The sequence is that of Proteasome subunit alpha type-2 from Trypanosoma brucei brucei.